The sequence spans 132 residues: Small ribosomal subunit protein uS8 (132 aa).

Belongs to the universal ribosomal protein uS8 family. Part of the 30S ribosomal subunit. Contacts proteins S5 and S12.

Functionally, one of the primary rRNA binding proteins, it binds directly to 16S rRNA central domain where it helps coordinate assembly of the platform of the 30S subunit. In Xanthomonas axonopodis pv. citri (strain 306), this protein is Small ribosomal subunit protein uS8.